Here is a 173-residue protein sequence, read N- to C-terminus: Acireductone dioxygenase (173 aa).

The tract at residues 1 to 20 is disordered; sequence MKVYEYDNSTEDQREDHDSG. Fe(2+) contacts are provided by His81, His83, Glu87, and His126. Residues His81, His83, Glu87, and His126 each coordinate Ni(2+).

It belongs to the acireductone dioxygenase (ARD) family. Fe(2+) is required as a cofactor. The cofactor is Ni(2+).

The protein resides in the cytoplasm. It is found in the nucleus. It catalyses the reaction 1,2-dihydroxy-5-(methylsulfanyl)pent-1-en-3-one + O2 = 4-methylsulfanyl-2-oxobutanoate + formate + 2 H(+). The enzyme catalyses 1,2-dihydroxy-5-(methylsulfanyl)pent-1-en-3-one + O2 = 3-(methylsulfanyl)propanoate + CO + formate + 2 H(+). It participates in amino-acid biosynthesis; L-methionine biosynthesis via salvage pathway; L-methionine from S-methyl-5-thio-alpha-D-ribose 1-phosphate: step 5/6. Its function is as follows. Catalyzes 2 different reactions between oxygen and the acireductone 1,2-dihydroxy-3-keto-5-methylthiopentene (DHK-MTPene) depending upon the metal bound in the active site. Fe-containing acireductone dioxygenase (Fe-ARD) produces formate and 2-keto-4-methylthiobutyrate (KMTB), the alpha-ketoacid precursor of methionine in the methionine recycle pathway. Ni-containing acireductone dioxygenase (Ni-ARD) produces methylthiopropionate, carbon monoxide and formate, and does not lie on the methionine recycle pathway. The protein is Acireductone dioxygenase of Tuber melanosporum (strain Mel28) (Perigord black truffle).